Reading from the N-terminus, the 483-residue chain is Aspartyl/glutamyl-tRNA(Asn/Gln) amidotransferase subunit B (483 aa).

The protein belongs to the GatB/GatE family. GatB subfamily. In terms of assembly, heterotrimer of A, B and C subunits.

It catalyses the reaction L-glutamyl-tRNA(Gln) + L-glutamine + ATP + H2O = L-glutaminyl-tRNA(Gln) + L-glutamate + ADP + phosphate + H(+). The enzyme catalyses L-aspartyl-tRNA(Asn) + L-glutamine + ATP + H2O = L-asparaginyl-tRNA(Asn) + L-glutamate + ADP + phosphate + 2 H(+). Its function is as follows. Allows the formation of correctly charged Asn-tRNA(Asn) or Gln-tRNA(Gln) through the transamidation of misacylated Asp-tRNA(Asn) or Glu-tRNA(Gln) in organisms which lack either or both of asparaginyl-tRNA or glutaminyl-tRNA synthetases. The reaction takes place in the presence of glutamine and ATP through an activated phospho-Asp-tRNA(Asn) or phospho-Glu-tRNA(Gln). The polypeptide is Aspartyl/glutamyl-tRNA(Asn/Gln) amidotransferase subunit B (Anaplasma phagocytophilum (strain HZ)).